Here is a 621-residue protein sequence, read N- to C-terminus: UvrABC system protein C (621 aa).

Residues 20 to 106 (TQSGIYQFFD…IKSLKPKYNI (87 aa)) enclose the GIY-YIG domain. The 36-residue stretch at 212 to 247 (KALLKILESKMHTLSHNLQFEEAAIMRDRIQKITQM) folds into the UVR domain.

It belongs to the UvrC family. In terms of assembly, interacts with UvrB in an incision complex.

It is found in the cytoplasm. The UvrABC repair system catalyzes the recognition and processing of DNA lesions. UvrC both incises the 5' and 3' sides of the lesion. The N-terminal half is responsible for the 3' incision and the C-terminal half is responsible for the 5' incision. The chain is UvrABC system protein C from Helicobacter hepaticus (strain ATCC 51449 / 3B1).